We begin with the raw amino-acid sequence, 310 residues long: Porphobilinogen deaminase (310 aa).

S-(dipyrrolylmethanemethyl)cysteine is present on C242.

This sequence belongs to the HMBS family. As to quaternary structure, monomer. It depends on dipyrromethane as a cofactor.

The enzyme catalyses 4 porphobilinogen + H2O = hydroxymethylbilane + 4 NH4(+). It functions in the pathway porphyrin-containing compound metabolism; protoporphyrin-IX biosynthesis; coproporphyrinogen-III from 5-aminolevulinate: step 2/4. Functionally, tetrapolymerization of the monopyrrole PBG into the hydroxymethylbilane pre-uroporphyrinogen in several discrete steps. This chain is Porphobilinogen deaminase, found in Shewanella sp. (strain W3-18-1).